Reading from the N-terminus, the 572-residue chain is Proline--tRNA ligase (572 aa).

The protein belongs to the class-II aminoacyl-tRNA synthetase family. ProS type 1 subfamily. In terms of assembly, homodimer.

It localises to the cytoplasm. It carries out the reaction tRNA(Pro) + L-proline + ATP = L-prolyl-tRNA(Pro) + AMP + diphosphate. Catalyzes the attachment of proline to tRNA(Pro) in a two-step reaction: proline is first activated by ATP to form Pro-AMP and then transferred to the acceptor end of tRNA(Pro). As ProRS can inadvertently accommodate and process non-cognate amino acids such as alanine and cysteine, to avoid such errors it has two additional distinct editing activities against alanine. One activity is designated as 'pretransfer' editing and involves the tRNA(Pro)-independent hydrolysis of activated Ala-AMP. The other activity is designated 'posttransfer' editing and involves deacylation of mischarged Ala-tRNA(Pro). The misacylated Cys-tRNA(Pro) is not edited by ProRS. The chain is Proline--tRNA ligase from Yersinia pestis bv. Antiqua (strain Antiqua).